A 223-amino-acid chain; its full sequence is Ubiquinone biosynthesis protein COQ4 homolog 2, mitochondrial (223 aa).

The N-terminal 26 residues, 1–26, are a transit peptide targeting the mitochondrion; it reads MFLRRVHPVRLGHAIQRSLTTTKSRN. Residues 21 to 32 show a composition bias toward low complexity; it reads TTKSRNESTTTT. A disordered region spans residues 21–43; it reads TTKSRNESTTTTVEAPQAVPSPP. Positions 177, 178, 181, and 193 each coordinate Zn(2+).

Belongs to the COQ4 family. As to quaternary structure, component of a multi-subunit COQ enzyme complex. Zn(2+) is required as a cofactor.

Its subcellular location is the mitochondrion inner membrane. It catalyses the reaction a 4-hydroxy-3-methoxy-5-(all-trans-polyprenyl)benzoate + H(+) = a 2-methoxy-6-(all-trans-polyprenyl)phenol + CO2. Its pathway is cofactor biosynthesis; ubiquinone biosynthesis. Lyase that catalyzes the C1-decarboxylation of 4-hydroxy-3-methoxy-5-(all-trans-polyprenyl)benzoic acid into 2-methoxy-6-(all-trans-polyprenyl)phenol during ubiquinone biosynthesis. The polypeptide is Ubiquinone biosynthesis protein COQ4 homolog 2, mitochondrial (Culex quinquefasciatus (Southern house mosquito)).